A 595-amino-acid polypeptide reads, in one-letter code: Probable hydrolase M10 (595 aa).

Residues 1-23 form the signal peptide; sequence MRFTSTILLRVAVLLSLGGGSQT. N59, N87, N266, N436, N457, and N561 each carry an N-linked (GlcNAc...) asparagine glycan.

This sequence belongs to the beta-lactamase family.

The protein operates within secondary metabolite biosynthesis. In terms of biological role, probable hydrolase; part of the gene cluster that mediates the biosynthesis of squalestatin S1 (SQS1, also known as zaragozic acid A), a heavily oxidized fungal polyketide that offers potent cholesterol lowering activity by targeting squalene synthase (SS). SQS1 is composed of a 2,8-dioxobicyclic[3.2.1]octane-3,4,5-tricarboxyclic acid core that is connected to two lipophilic polyketide arms. These initial steps feature the priming of an unusual benzoic acid starter unit onto the highly reducing polyketide synthase pks2, followed by oxaloacetate extension and product release to generate a tricarboxylic acid containing product. The phenylalanine ammonia lyase (PAL) M7 and the acyl-CoA ligase M9 are involved in transforming phenylalanine into benzoyl-CoA. The citrate synthase-like protein R3 is involved in connecting the C-alpha-carbons of the hexaketide chain and oxaloacetate to afford the tricarboxylic acid unit. The potential hydrolytic enzymes, M8 and M10, are in close proximity to pks2 and may participate in product release. On the other side, the tetraketide arm is synthesized by a the squalestatin tetraketide synthase pks1 and enzymatically esterified to the core in the last biosynthetic step, by the acetyltransferase M4. The biosynthesis of the tetraketide must involve 3 rounds of chain extension. After the first and second rounds methyl-transfer occurs, and in all rounds of extension the ketoreductase and dehydratase are active. The enoyl reductase and C-MeT of pks1 are not active in the final round of extension. The acetyltransferase M4 appears to have a broad substrate selectivity for its acyl CoA substrate, allowing the in vitro synthesis of novel squalestatins. The biosynthesis of SQS1 requires several oxidative steps likely performed by oxidoreductases M1, R1 and R2. Finally, in support of the identification of the cluster as being responsible for SQS1 production, the cluster contains a gene encoding a putative squalene synthase (SS) R6, suggesting a likely mechanism for self-resistance. The protein is Probable hydrolase M10 of Phoma sp. (strain ATCC 20986 / MF5453).